Consider the following 49-residue polypeptide: MKHNPLVVCLLIICITILTFTLLTRQTLYELRFRDGDKEVAALMACTSR.

A helical membrane pass occupies residues 4 to 24 (NPLVVCLLIICITILTFTLLT).

This sequence belongs to the Hok/Gef family.

It localises to the cell inner membrane. Its function is as follows. Toxic component of a type I toxin-antitoxin (TA) system. When overexpressed kills cells within minutes; causes collapse of the transmembrane potential and arrest of respiration. Expression leads to membrane depolarization; when protein levels are high enough depolarization probably leads to lowered metabolic activity which in turn induces some cells to enter the persistent state in which they transiently survive antibiotic exposure. Its toxic effect is probably neutralized by antisense antitoxin RNA SokB, which is encoded in trans on the opposite DNA strand. This Escherichia coli (strain K12) protein is Toxic protein HokB.